A 493-amino-acid polypeptide reads, in one-letter code: Zinc finger CCCH domain-containing protein 34 (493 aa).

3 consecutive C3H1-type zinc fingers follow at residues Arg14–Gly43, Arg45–Leu71, and Val91–Leu118. Residues Met397–Lys477 form a disordered region. Residues Phe409–Gln420 are compositionally biased toward basic residues. Positions Ser452–Ser468 are enriched in polar residues.

The sequence is that of Zinc finger CCCH domain-containing protein 34 from Oryza sativa subsp. japonica (Rice).